Reading from the N-terminus, the 159-residue chain is Disulfide bond formation protein B (159 aa).

The Cytoplasmic segment spans residues 1–8 (MQANSRAF). The chain crosses the membrane as a helical span at residues 9–25 (FLLIAVIAFGLVGYALY). Topologically, residues 26–43 (LQHVEGLQPCPLCVLQRF) are periplasmic. Cys-35 and Cys-38 are disulfide-bonded. A helical membrane pass occupies residues 44 to 57 (AFVGIGVFSLLAAL). The Cytoplasmic portion of the chain corresponds to 58–63 (SSATRL). Residues 64–81 (LWHGLGMLSGLGGIFVAG) form a helical membrane-spanning segment. Topologically, residues 82–136 (YHVSLLLNPKASCGIDPIENWVNALPTAKWLPQVFESDGLCTAPLPPVLGVSIPL) are periplasmic. The cysteines at positions 94 and 122 are disulfide-linked. The chain crosses the membrane as a helical span at residues 137–155 (WSLIWMVILALTLVVAMIR). The Cytoplasmic segment spans residues 156–159 (RERR).

This sequence belongs to the DsbB family.

It localises to the cell inner membrane. Its function is as follows. Required for disulfide bond formation in some periplasmic proteins. Acts by oxidizing the DsbA protein. The sequence is that of Disulfide bond formation protein B from Ralstonia nicotianae (strain ATCC BAA-1114 / GMI1000) (Ralstonia solanacearum).